A 48-amino-acid chain; its full sequence is Cytochrome b559 subunit beta (48 aa).

A helical transmembrane segment spans residues 23–39 (WLAVHALAIPTVFFLGA). His27 contacts heme.

This sequence belongs to the PsbE/PsbF family. As to quaternary structure, heterodimer of an alpha subunit and a beta subunit. PSII is composed of 1 copy each of membrane proteins PsbA, PsbB, PsbC, PsbD, PsbE, PsbF, PsbH, PsbI, PsbJ, PsbK, PsbL, PsbM, PsbT, PsbX, PsbY, Psb30/Ycf12, peripheral proteins PsbO, CyanoQ (PsbQ), PsbU, PsbV and a large number of cofactors. It forms dimeric complexes. Heme b serves as cofactor.

The protein resides in the cellular thylakoid membrane. Its function is as follows. This b-type cytochrome is tightly associated with the reaction center of photosystem II (PSII). PSII is a light-driven water:plastoquinone oxidoreductase that uses light energy to abstract electrons from H(2)O, generating O(2) and a proton gradient subsequently used for ATP formation. It consists of a core antenna complex that captures photons, and an electron transfer chain that converts photonic excitation into a charge separation. The chain is Cytochrome b559 subunit beta from Prochlorococcus marinus (strain SARG / CCMP1375 / SS120).